A 152-amino-acid polypeptide reads, in one-letter code: Cytochrome c-type biogenesis CcmH-like mitochondrial protein (152 aa).

Over 1–83 (MATEEDVKQR…ILYTPKFDLQ (83 aa)) the chain is Mitochondrial intermembrane. Positions 26 and 29 each coordinate heme. Residues 84 to 104 (TAAIWLSPVIVGGVAAGVWAY) form a helical membrane-spanning segment. At 105 to 152 (KKHRQRTNVHIMALNLVRGVPLTPREKETMLDVLTPPPPANKWWWPGK) the chain is on the mitochondrial matrix side.

This sequence belongs to the CcmH/CycL/Ccl2/NrfF family.

It is found in the mitochondrion inner membrane. Plays a role in mitochondrial cytochrome c maturation. Probable component of a heme lyase complex involved in the reduction of apocytochrome c. The polypeptide is Cytochrome c-type biogenesis CcmH-like mitochondrial protein (Oryza sativa subsp. indica (Rice)).